A 68-amino-acid polypeptide reads, in one-letter code: uncharacterized protein (68 aa).

The helical transmembrane segment at 24–44 threads the bilayer; the sequence is AHICKCIAMFFVVAGVVLMFF.

The protein resides in the endoplasmic reticulum. The protein localises to the membrane. This is an uncharacterized protein from Saccharomyces cerevisiae (strain ATCC 204508 / S288c) (Baker's yeast).